The following is a 439-amino-acid chain: GTPase Der (439 aa).

EngA-type G domains follow at residues 2–168 and 181–357; these read ATVL…EEKG and IKVA…ASYT. Residues 8–15, 55–59, 118–121, 187–194, 234–238, and 300–303 contribute to the GTP site; these read GKPNVGKS, DTCGV, NKTE, GRPNVGKS, DTAGL, and NKWD. The region spanning 358-439 is the KH-like domain; sequence TKVPSSAINS…PIFLKFKRSR (82 aa).

Belongs to the TRAFAC class TrmE-Era-EngA-EngB-Septin-like GTPase superfamily. EngA (Der) GTPase family. As to quaternary structure, associates with the 50S ribosomal subunit.

Functionally, GTPase that plays an essential role in the late steps of ribosome biogenesis. The protein is GTPase Der of Thermotoga petrophila (strain ATCC BAA-488 / DSM 13995 / JCM 10881 / RKU-1).